The following is a 552-amino-acid chain: Chaperonin GroEL (552 aa).

ATP contacts are provided by residues 30–33 (TLGP), Lys51, 87–91 (DGTTT), Gly415, 480–482 (NAA), and Asp496.

This sequence belongs to the chaperonin (HSP60) family. As to quaternary structure, forms a cylinder of 14 subunits composed of two heptameric rings stacked back-to-back. Interacts with the co-chaperonin GroES.

The protein resides in the cytoplasm. It carries out the reaction ATP + H2O + a folded polypeptide = ADP + phosphate + an unfolded polypeptide.. In terms of biological role, together with its co-chaperonin GroES, plays an essential role in assisting protein folding. The GroEL-GroES system forms a nano-cage that allows encapsulation of the non-native substrate proteins and provides a physical environment optimized to promote and accelerate protein folding. In Verminephrobacter eiseniae (strain EF01-2), this protein is Chaperonin GroEL.